The following is an 842-amino-acid chain: DNA mismatch repair protein MutS (842 aa).

Residue 596 to 603 (GPNMSGKS) coordinates ATP.

It belongs to the DNA mismatch repair MutS family.

Its function is as follows. This protein is involved in the repair of mismatches in DNA. It is possible that it carries out the mismatch recognition step. This protein has a weak ATPase activity. In Exiguobacterium sp. (strain ATCC BAA-1283 / AT1b), this protein is DNA mismatch repair protein MutS.